We begin with the raw amino-acid sequence, 199 residues long: MLRIGLTGGIGSGKSTVANYFAELGAPVIDADQIAHEITKPDQAAFKQIINHFGNAVLTKGKFLNRTKLRELIFENPDDRQWLENLLHPLIIAKMKTQLKKIKAPYCILAIPLLAEASQSVDFIDRILVVDAPETLQIQRTKSRDQLSDQQIQLILQSQSPREKRLAIADDVIVNDQTIPILRKAVFQLHCKYLQIAQT.

The DPCK domain maps to 3 to 199 (RIGLTGGIGS…HCKYLQIAQT (197 aa)). Residue 11–16 (GSGKST) participates in ATP binding.

Belongs to the CoaE family.

It localises to the cytoplasm. It carries out the reaction 3'-dephospho-CoA + ATP = ADP + CoA + H(+). It participates in cofactor biosynthesis; coenzyme A biosynthesis; CoA from (R)-pantothenate: step 5/5. Functionally, catalyzes the phosphorylation of the 3'-hydroxyl group of dephosphocoenzyme A to form coenzyme A. This is Dephospho-CoA kinase from Coxiella burnetii (strain RSA 493 / Nine Mile phase I).